Reading from the N-terminus, the 73-residue chain is Small ribosomal subunit protein bS18 (73 aa).

The protein belongs to the bacterial ribosomal protein bS18 family. Part of the 30S ribosomal subunit. Forms a tight heterodimer with protein bS6.

Functionally, binds as a heterodimer with protein bS6 to the central domain of the 16S rRNA, where it helps stabilize the platform of the 30S subunit. This Prochlorococcus marinus (strain NATL2A) protein is Small ribosomal subunit protein bS18.